A 426-amino-acid chain; its full sequence is MSKSENLYSAARELIPGGVNSPVRAFTGVGGTPLFIEKADGAYLYDVDGKAYIDYVGSWGPMVLGHNHPAIRNAVIEAAERGLSFGAPTEMEVKMAQLVTELVPTMDMVRMVNSGTEATMSAIRLARGFTGRDKIIKFEGCYHGHADCLLVKAGSGALTLGQPNSPGVPADFAKHTLTCTYNDLASVRAAFEQYPQEIACIIVEPVAGNMNCVPPLPDFLPGLRALCDEFGALLIIDEVMTGFRVALAGAQDYYGVEPDLTCLGKIIGGGMPVGAFGGRRDVMDALAPTGPVYQAGTLSGNPIAMAAGFACLNEVAQPGVHETLDELTTRLAEGLLEAAEEAGIPLVVNHVGGMFGIFFTDAESVTCYQDVMACDVERFKRFFHMMLDEGVYLAPSAFEAGFMSVAHSMEDINNTIDAARRVFAKL.

K265 carries the N6-(pyridoxal phosphate)lysine modification.

The protein belongs to the class-III pyridoxal-phosphate-dependent aminotransferase family. HemL subfamily. In terms of assembly, homodimer. Pyridoxal 5'-phosphate serves as cofactor.

The protein localises to the cytoplasm. It catalyses the reaction (S)-4-amino-5-oxopentanoate = 5-aminolevulinate. It participates in porphyrin-containing compound metabolism; protoporphyrin-IX biosynthesis; 5-aminolevulinate from L-glutamyl-tRNA(Glu): step 2/2. The sequence is that of Glutamate-1-semialdehyde 2,1-aminomutase from Escherichia coli O157:H7.